An 800-amino-acid chain; its full sequence is DEP domain-containing protein 1A (800 aa).

One can recognise a DEP domain in the interval 24–108 (FRAGMPLKKH…DNSQLYRFPS (85 aa)). 3 disordered regions span residues 147-173 (ETLE…RSRE), 306-326 (SQPG…AKNP), and 459-485 (INTS…ARAR). The Rho-GAP domain maps to 281 to 321 (PLLTYQYYELFVNILVMCGYITTPKSQPGKRKNQEEPNCPQ). Residues 459–468 (INTSGSSVSS) are compositionally biased toward low complexity.

The protein is DEP domain-containing protein 1A (depdc1a) of Danio rerio (Zebrafish).